A 283-amino-acid polypeptide reads, in one-letter code: Diaminopimelate epimerase (283 aa).

Asn-14, Gln-47, and Asn-67 together coordinate substrate. Cys-76 functions as the Proton donor in the catalytic mechanism. Substrate contacts are provided by residues 77 to 78 (GN), Asn-164, Asn-197, and 215 to 216 (ER). Catalysis depends on Cys-224, which acts as the Proton acceptor. 225–226 (GT) is a substrate binding site.

This sequence belongs to the diaminopimelate epimerase family. As to quaternary structure, homodimer.

It localises to the cytoplasm. The catalysed reaction is (2S,6S)-2,6-diaminopimelate = meso-2,6-diaminopimelate. The protein operates within amino-acid biosynthesis; L-lysine biosynthesis via DAP pathway; DL-2,6-diaminopimelate from LL-2,6-diaminopimelate: step 1/1. Functionally, catalyzes the stereoinversion of LL-2,6-diaminopimelate (L,L-DAP) to meso-diaminopimelate (meso-DAP), a precursor of L-lysine and an essential component of the bacterial peptidoglycan. In Neisseria meningitidis serogroup A / serotype 4A (strain DSM 15465 / Z2491), this protein is Diaminopimelate epimerase.